A 195-amino-acid polypeptide reads, in one-letter code: Myelin-associated neurite-outgrowth inhibitor (195 aa).

The Cytoplasmic segment spans residues 1–18 (MNPVYSPASSGVPYANPK). The helical transmembrane segment at 19-43 (GIGYPAGFPVGYAAAAPAYSPSMYP) threads the bilayer. The Extracellular segment spans residues 44–143 (GANPAFPSGY…APPIPPPRPN (100 aa)). Residues 144–163 (GVTMGMVGGTTMAMSAGTLL) form a helical membrane-spanning segment. The Cytoplasmic segment spans residues 164 to 195 (TTHSPTPVAPHPSMPTYRQPATPTYSYVPPQW).

It belongs to the FAM168 family.

It localises to the cytoplasm. Its subcellular location is the perinuclear region. It is found in the cell membrane. The protein localises to the cell projection. The protein resides in the axon. Inhibitor of neuronal axonal outgrowth. The polypeptide is Myelin-associated neurite-outgrowth inhibitor (fam168b) (Danio rerio (Zebrafish)).